The chain runs to 118 residues: Large ribosomal subunit protein uL22c (118 aa).

It belongs to the universal ribosomal protein uL22 family. In terms of assembly, part of the 50S ribosomal subunit.

The protein resides in the plastid. It is found in the organellar chromatophore. This protein binds specifically to 23S rRNA. Functionally, the globular domain of the protein is located near the polypeptide exit tunnel on the outside of the subunit, while an extended beta-hairpin is found that lines the wall of the exit tunnel in the center of the 70S ribosome. The polypeptide is Large ribosomal subunit protein uL22c (rpl22) (Paulinella chromatophora).